The following is a 446-amino-acid chain: Exodeoxyribonuclease 7 large subunit (446 aa).

It belongs to the XseA family. As to quaternary structure, heterooligomer composed of large and small subunits.

The protein localises to the cytoplasm. It catalyses the reaction Exonucleolytic cleavage in either 5'- to 3'- or 3'- to 5'-direction to yield nucleoside 5'-phosphates.. Functionally, bidirectionally degrades single-stranded DNA into large acid-insoluble oligonucleotides, which are then degraded further into small acid-soluble oligonucleotides. The protein is Exodeoxyribonuclease 7 large subunit of Streptococcus agalactiae serotype III (strain NEM316).